We begin with the raw amino-acid sequence, 427 residues long: Phosphoribosylamine--glycine ligase (427 aa).

Positions 110–315 (KDFCQRHGLP…IVPILLAAAK (206 aa)) constitute an ATP-grasp domain. 136–196 (LDTLEAPFVI…EEFMHGEEAS (61 aa)) is an ATP binding site. 2 residues coordinate Mg(2+): Glu285 and Asn287.

It belongs to the GARS family. Requires Mg(2+) as cofactor. Mn(2+) serves as cofactor.

The catalysed reaction is 5-phospho-beta-D-ribosylamine + glycine + ATP = N(1)-(5-phospho-beta-D-ribosyl)glycinamide + ADP + phosphate + H(+). The protein operates within purine metabolism; IMP biosynthesis via de novo pathway; N(1)-(5-phospho-D-ribosyl)glycinamide from 5-phospho-alpha-D-ribose 1-diphosphate: step 2/2. In Caulobacter vibrioides (strain ATCC 19089 / CIP 103742 / CB 15) (Caulobacter crescentus), this protein is Phosphoribosylamine--glycine ligase.